A 242-amino-acid polypeptide reads, in one-letter code: Host range factor p28 (242 aa).

In terms of domain architecture, KilA-N spans 21 to 131 (YIDEPNDIRL…QSILRGLVNW (111 aa)). The RING-type zinc-finger motif lies at 173 to 226 (CGICYEVVYSKRLENDRYFGLLDSCNHIFCITCINIWHRTRRETGASDNCPICR).

The protein belongs to the orthopoxvirus OPG021 family.

The protein resides in the host cytoplasm. The catalysed reaction is S-ubiquitinyl-[E2 ubiquitin-conjugating enzyme]-L-cysteine + [acceptor protein]-L-lysine = [E2 ubiquitin-conjugating enzyme]-L-cysteine + N(6)-ubiquitinyl-[acceptor protein]-L-lysine.. Functionally, RING-finger E3 ubiquitin ligase which catalyzes the formation of both 'Lys-48'- and 'Lys-63'-linked polyubiquitin chains. Plays an important role in virulence by acting as an anti-apoptotic factor. The chain is Host range factor p28 (OPG021) from Monkeypox virus.